We begin with the raw amino-acid sequence, 293 residues long: Elongation factor Ts (293 aa).

The segment at 80–83 is involved in Mg(2+) ion dislocation from EF-Tu; sequence TDFV.

It belongs to the EF-Ts family.

Its subcellular location is the cytoplasm. Functionally, associates with the EF-Tu.GDP complex and induces the exchange of GDP to GTP. It remains bound to the aminoacyl-tRNA.EF-Tu.GTP complex up to the GTP hydrolysis stage on the ribosome. The sequence is that of Elongation factor Ts from Herminiimonas arsenicoxydans.